A 445-amino-acid polypeptide reads, in one-letter code: Cyclin-B1-2 (445 aa).

Belongs to the cyclin family. Cyclin AB subfamily. Interacts with FZR2/CCS52A1, FZR1/CCS52A2 and FZR3/CCS52B. Expressed in roots, stems and flowers.

Its function is as follows. May induce mitotic cell division. The chain is Cyclin-B1-2 (CYCB1-2) from Arabidopsis thaliana (Mouse-ear cress).